We begin with the raw amino-acid sequence, 122 residues long: UPF0382 membrane protein SH2409 (122 aa).

4 helical membrane-spanning segments follow: residues Leu-3–Ala-23, Met-46–Val-66, Ala-69–Leu-89, and Ile-98–Phe-118.

Belongs to the UPF0382 family.

It localises to the cell membrane. The sequence is that of UPF0382 membrane protein SH2409 from Staphylococcus haemolyticus (strain JCSC1435).